We begin with the raw amino-acid sequence, 138 residues long: MATRTQARGAVVELLYAFESGNEEIKKIASSMLEEKKIKNNQLAFALSLFNGVLEKINEIDALIEPHLKDWDFKRLGSMEKAILRLGAYEIGFTPTQNPIIINECIELGKLYAEPNTPKFLNAILDSLSKKLAQKPLN.

The protein belongs to the NusB family.

Involved in transcription antitermination. Required for transcription of ribosomal RNA (rRNA) genes. Binds specifically to the boxA antiterminator sequence of the ribosomal RNA (rrn) operons. This chain is Transcription antitermination protein NusB, found in Helicobacter pylori (strain Shi470).